Here is a 216-residue protein sequence, read N- to C-terminus: Superoxide dismutase [Cu-Zn], chloroplastic (216 aa).

Residues 1-62 (MACHSALAAV…ASPRSMVVVA (62 aa)) constitute a chloroplast transit peptide. His-108, His-110, and His-125 together coordinate Cu cation. Cysteines 119 and 208 form a disulfide. Zn(2+) contacts are provided by His-125, His-133, His-142, and Asp-145. His-182 serves as a coordination point for Cu cation.

The protein belongs to the Cu-Zn superoxide dismutase family. As to quaternary structure, homotetramer. Requires Cu cation as cofactor. The cofactor is Zn(2+).

The protein localises to the plastid. Its subcellular location is the chloroplast. The catalysed reaction is 2 superoxide + 2 H(+) = H2O2 + O2. Its function is as follows. Destroys radicals which are normally produced within the cells and which are toxic to biological systems. The polypeptide is Superoxide dismutase [Cu-Zn], chloroplastic (SODCP) (Zantedeschia aethiopica (White calla lily)).